A 662-amino-acid polypeptide reads, in one-letter code: Envelope glycoprotein (662 aa).

An N-terminal signal peptide occupies residues 1 to 34 (MEGPTHPKPSKDKTFSWDLMILVGVLLRLDVGMA). Residues 35 to 606 (NPSPHQIYNV…FNKSPWFTTL (572 aa)) lie on the Extracellular side of the membrane. N-linked (GlcNAc...) asparagine; by host glycans are attached at residues Asn43 and Asn58. Disulfide bonds link Cys115-Cys132 and Cys124-Cys137. Positions 251 to 281 (VLPDQKPPSRQSQIESRVTPHHSQGNGGTPG) are disordered. A compositionally biased stretch (polar residues) spans 258 to 274 (PSRQSQIESRVTPHHSQ). N-linked (GlcNAc...) asparagine; by host glycosylation is found at Asn286, Asn322, and Asn327. 3 disulfide bridges follow: Cys332/Cys335, Cys332/Cys559, and Cys551/Cys558. The CXXC motif lies at 332-335 (CWLC). N-linked (GlcNAc...) asparagine; by host glycosylation is found at Asn351, Asn354, and Asn430. Residues 468–488 (ISLTVALMLGGLTVGGIAAGV) form a fusion peptide region. 2 coiled-coil regions span residues 496-545 (LETA…ILFL) and 555-591 (KEEC…SQQG). An immunosuppression region spans residues 534–550 (LQNRRGLDILFLQEGGL). A CX6CC motif is present at residues 551 to 559 (CAALKEECC). A helical membrane pass occupies residues 607 to 627 (ISSIMGPLLILLLILLFGPCI). Residue Cys626 is the site of S-palmitoyl cysteine; by host attachment. Residues 628-662 (LNRLVQFVKDRISVVQALILTQQYQQIKQYDPDQP) lie on the Cytoplasmic side of the membrane.

In terms of assembly, the mature envelope protein (Env) consists of a trimer of SU-TM heterodimers attached by a labile interchain disulfide bond. Specific enzymatic cleavages in vivo yield mature proteins. Envelope glycoproteins are synthesized as an inactive precursor that is N-glycosylated and processed likely by host cell furin or by a furin-like protease in the Golgi to yield the mature SU and TM proteins. The cleavage site between SU and TM requires the minimal sequence [KR]-X-[KR]-R. The R-peptide is released from the C-terminus of the cytoplasmic tail of the TM protein upon particle formation as a result of proteolytic cleavage by the viral protease. Cleavage of this peptide is required for TM to become fusogenic. In terms of processing, the CXXC motif is highly conserved across a broad range of retroviral envelope proteins. It is thought to participate in the formation of a labile disulfide bond possibly with the CX6CC motif present in the transmembrane protein. Isomerization of the intersubunit disulfide bond to an SU intrachain disulfide bond is thought to occur upon receptor recognition in order to allow membrane fusion. Post-translationally, the transmembrane protein is palmitoylated. The R-peptide is palmitoylated.

The protein localises to the virion membrane. The protein resides in the host cell membrane. In terms of biological role, the surface protein (SU) attaches the virus to the host cell by binding to its receptor. This interaction triggers the refolding of the transmembrane protein (TM) and is thought to activate its fusogenic potential by unmasking its fusion peptide. Fusion occurs at the host cell plasma membrane. Functionally, the transmembrane protein (TM) acts as a class I viral fusion protein. Under the current model, the protein has at least 3 conformational states: pre-fusion native state, pre-hairpin intermediate state, and post-fusion hairpin state. During viral and target cell membrane fusion, the coiled coil regions (heptad repeats) assume a trimer-of-hairpins structure, positioning the fusion peptide in close proximity to the C-terminal region of the ectodomain. The formation of this structure appears to drive apposition and subsequent fusion of viral and target cell membranes. Membranes fusion leads to delivery of the nucleocapsid into the cytoplasm. This chain is Envelope glycoprotein (env), found in Felis catus (Cat).